Consider the following 312-residue polypeptide: Zinc transporter ZitB (312 aa).

6 helical membrane-spanning segments follow: residues 16–36 (LLIA…GGWL), 40–60 (LALL…FIAL), 81–101 (LTTL…ILIV), 117–137 (TPML…FWIL), 153–173 (LHVL…IVIL), and 177–197 (WTPI…RSAW).

The protein belongs to the cation diffusion facilitator (CDF) transporter (TC 2.A.4) family. SLC30A subfamily.

It localises to the cell inner membrane. Involved in zinc efflux across the cytoplasmic membrane, thus reducing zinc accumulation in the cytoplasm and rendering bacteria more resistant to zinc. It may contribute to zinc homeostasis at low concentrations of zinc. This Yersinia pestis protein is Zinc transporter ZitB.